A 1114-amino-acid polypeptide reads, in one-letter code: Kinesin-like protein KIN-12F (1114 aa).

The tract at residues M1 to R84 is disordered. 2 stretches are compositionally biased toward polar residues: residues L10–D39 and P48–A80. One can recognise a Kinesin motor domain in the interval H104–M436. ATP is bound at residue G175–T182. Coiled coils occupy residues Q761–D791, A872–A942, and E1038–E1081. The interval N1092 to M1114 is disordered.

It belongs to the TRAFAC class myosin-kinesin ATPase superfamily. Kinesin family. KIN-12 subfamily.

In Arabidopsis thaliana (Mouse-ear cress), this protein is Kinesin-like protein KIN-12F.